The chain runs to 146 residues: D-aminoacyl-tRNA deacylase (146 aa).

The short motif at 137-138 (GP) is the Gly-cisPro motif, important for rejection of L-amino acids element.

The protein belongs to the DTD family. As to quaternary structure, homodimer.

The protein resides in the cytoplasm. The catalysed reaction is glycyl-tRNA(Ala) + H2O = tRNA(Ala) + glycine + H(+). It catalyses the reaction a D-aminoacyl-tRNA + H2O = a tRNA + a D-alpha-amino acid + H(+). An aminoacyl-tRNA editing enzyme that deacylates mischarged D-aminoacyl-tRNAs. Also deacylates mischarged glycyl-tRNA(Ala), protecting cells against glycine mischarging by AlaRS. Acts via tRNA-based rather than protein-based catalysis; rejects L-amino acids rather than detecting D-amino acids in the active site. By recycling D-aminoacyl-tRNA to D-amino acids and free tRNA molecules, this enzyme counteracts the toxicity associated with the formation of D-aminoacyl-tRNA entities in vivo and helps enforce protein L-homochirality. The sequence is that of D-aminoacyl-tRNA deacylase from Bacillus cytotoxicus (strain DSM 22905 / CIP 110041 / 391-98 / NVH 391-98).